Here is a 468-residue protein sequence, read N- to C-terminus: 3-isopropylmalate dehydratase large subunit (468 aa).

Cys347, Cys408, and Cys411 together coordinate [4Fe-4S] cluster.

This sequence belongs to the aconitase/IPM isomerase family. LeuC type 1 subfamily. As to quaternary structure, heterodimer of LeuC and LeuD. It depends on [4Fe-4S] cluster as a cofactor.

It catalyses the reaction (2R,3S)-3-isopropylmalate = (2S)-2-isopropylmalate. The protein operates within amino-acid biosynthesis; L-leucine biosynthesis; L-leucine from 3-methyl-2-oxobutanoate: step 2/4. Its function is as follows. Catalyzes the isomerization between 2-isopropylmalate and 3-isopropylmalate, via the formation of 2-isopropylmaleate. The protein is 3-isopropylmalate dehydratase large subunit of Methylobacillus flagellatus (strain ATCC 51484 / DSM 6875 / VKM B-1610 / KT).